The primary structure comprises 367 residues: Homoserine O-acetyltransferase (367 aa).

In terms of domain architecture, AB hydrolase-1 spans 44–350; sequence NAIMVTHAWT…AYGHDAFLLE (307 aa). The Nucleophile role is filled by S150. Residue R217 coordinates substrate. Residues D311 and H344 contribute to the active site. D345 is a substrate binding site.

Belongs to the AB hydrolase superfamily. MetX family. Homodimer.

It localises to the cytoplasm. The enzyme catalyses L-homoserine + acetyl-CoA = O-acetyl-L-homoserine + CoA. The protein operates within amino-acid biosynthesis; L-methionine biosynthesis via de novo pathway; O-acetyl-L-homoserine from L-homoserine: step 1/1. Transfers an acetyl group from acetyl-CoA to L-homoserine, forming acetyl-L-homoserine. This chain is Homoserine O-acetyltransferase, found in Geotalea daltonii (strain DSM 22248 / JCM 15807 / FRC-32) (Geobacter daltonii).